A 326-amino-acid chain; its full sequence is Probable cell division protein WhiA (326 aa).

The H-T-H motif DNA-binding region spans 275–308 (SLEELGQLSDPPLTKDAVAGRIRRLLAMADKKAS).

Belongs to the WhiA family.

Its function is as follows. Involved in cell division and chromosome segregation. The chain is Probable cell division protein WhiA from Beutenbergia cavernae (strain ATCC BAA-8 / DSM 12333 / CCUG 43141 / JCM 11478 / NBRC 16432 / NCIMB 13614 / HKI 0122).